The primary structure comprises 134 residues: UPF0412 protein YaaI (134 aa).

Positions 1–23 (MKSVFTISASLAISLMLCCTAQA) are cleaved as a signal peptide.

The protein belongs to the UPF0412 family.

The sequence is that of UPF0412 protein YaaI from Shigella dysenteriae serotype 1 (strain Sd197).